The chain runs to 972 residues: MKANKLSAITLCILGYAHTVYAESNMQTEKLETIVVSSEDDSVHNKNVGEIKKNAKALSKQQVQDSRDLVRYETGVTVVEKGRFGSSGYAIRGVDENRVAVVVDGLHQAETISSQGFKELFEGYGNFNNTRNGVEVENLKQAVIQKGADAIRTGSGSLGGTVSFESKDARDYLIDKNYHFGYKTGYSSADNQKLHSVTAAGRYSDFDLLAVHTQRHGNELRNYGYRHYDGSVVRKEREKADPYKITKQSSLIKIGYQLNDTNRFTLGYDDSRNTSRGTDWSNAFTSYNGGPFLKDVRHTNDQSNRKNISFVYENFDTNDFWDTLKITHNHQKIKLKARLDEYCDVNGEIDCPAIANPSGLYINDKGIFLDKHDGEITHKKEGEFNNYFDSKGKEVRVKGFNVDSILINCDQYDCSKPMQLLSSTNNGYGGSPNKYIYKTYELFEKTMNNGNGKYAVLEIRSSGHEKFSRVYLPSEKGYVENQWKDRDLNTDTQQYNIDLTKSFKLKSVEHNATYGGLYSEVKKSMTNRAGYEAYNRQWWANIFFGKENNKPNKCQPYNGNSFTTLCSHEDRLFSFLIPVKTKTGALYVTDKIKLNDKVNLDVAYRYDRIKHDPKYIPGTTPKLPTDLILGRFIEFKPKNTYATQDEKNENAEKNAVYLASKKTKFSANSYSATFSFDPMDFLKIQAKYATGFRAPTSDEIYFVFQHPSFSIYPNLYLKAERSKNKEVAITLHKQKSFLTVNLFQTDYKDFLDLAYLKKGSLPYGNGGSQLETLLYQNVNRDKARVKGLEVNSKLHLGDVWRTLDGFNLSYKLSLQKGRMSSKVGEEGKQRDTNKLDTPMNAIQPQTHVVGVGYEHPQEKFGVDMYLTHASAKKEKDTFNMFYDGKDQKDQHIKWRSDRYTLVDLIAYVKPVKNVTLRAGVYNLTNREYGTWDSIRSIRPFGTTNLINQETGKGIKRFNAPGRNFRVNAEITF.

An N-terminal signal peptide occupies residues Met1–Ala22. The TonB box motif lies at Glu32–Glu39. Positions Ser38–Lys167 constitute a TBDR plug domain. The region spanning Asp175–Phe972 is the TBDR beta-barrel domain. The short motif at Lys955–Phe972 is the TonB C-terminal box element.

It belongs to the TonB-dependent receptor family. Hemoglobin/haptoglobin binding protein subfamily.

It is found in the cell outer membrane. Acts as a receptor for hemoglobin or the hemoglobin/haptoglobin complex of the host and is required for heme uptake. May be involved in virulence. This chain is Hemoglobin and hemoglobin-haptoglobin-binding protein, found in Haemophilus ducreyi (strain 35000HP / ATCC 700724).